We begin with the raw amino-acid sequence, 310 residues long: Zinc finger protein-like 1 (310 aa).

Residues 1–43 (MGLCKCPKRKVTNLFCFEHRVNVCEHCLVANHAKCIVQSYLQW) form a B box-type; degenerate zinc finger. Over 1-266 (MGLCKCPKRK…RPLTLLQRAG (266 aa)) the chain is Cytoplasmic. The RING-type; degenerate zinc-finger motif lies at 53 to 101 (CRLCNIPLASRETTRLVCYDLFHWACLNERAAQLPRNTAPAGYQCPSCN). A disordered region spans residues 145–231 (PEPLNTSDFS…RTPGLHGDCD (87 aa)). A compositionally biased stretch (polar residues) spans 148 to 165 (LNTSDFSDWSSFNASSTP). Residues 213–224 (KVYDTRDDDRTP) show a composition bias toward basic and acidic residues. Residues 267–287 (LLLLLGLLGFLALLALMSRLG) form a helical membrane-spanning segment. At 288-310 (RAAADSDPNLDPLMNPHIRVGPS) the chain is on the lumenal side.

Belongs to the ZFPL1 family. In terms of assembly, interacts with GOLGA2/GM130. In terms of processing, phosphorylated. In terms of tissue distribution, expressed strongly in the exocrine pancreas.

It localises to the golgi apparatus. Its subcellular location is the cis-Golgi network membrane. Its function is as follows. Required for cis-Golgi integrity and efficient ER to Golgi transport. Involved in the maintenance of the integrity of the cis-Golgi, possibly via its interaction with GOLGA2/GM130. In Homo sapiens (Human), this protein is Zinc finger protein-like 1 (ZFPL1).